A 255-amino-acid chain; its full sequence is Small ribosomal subunit protein uS2 (255 aa).

A disordered region spans residues 226–255 (QGVSNEEVAAEQNIDLDEKEKSEETEATEE).

Belongs to the universal ribosomal protein uS2 family.

The polypeptide is Small ribosomal subunit protein uS2 (Staphylococcus aureus (strain Mu3 / ATCC 700698)).